The primary structure comprises 434 residues: Gamma-glutamyl phosphate reductase (434 aa).

It belongs to the gamma-glutamyl phosphate reductase family.

It is found in the cytoplasm. The catalysed reaction is L-glutamate 5-semialdehyde + phosphate + NADP(+) = L-glutamyl 5-phosphate + NADPH + H(+). The protein operates within amino-acid biosynthesis; L-proline biosynthesis; L-glutamate 5-semialdehyde from L-glutamate: step 2/2. Its function is as follows. Catalyzes the NADPH-dependent reduction of L-glutamate 5-phosphate into L-glutamate 5-semialdehyde and phosphate. The product spontaneously undergoes cyclization to form 1-pyrroline-5-carboxylate. In Nostoc sp. (strain PCC 7120 / SAG 25.82 / UTEX 2576), this protein is Gamma-glutamyl phosphate reductase.